Here is a 331-residue protein sequence, read N- to C-terminus: Pectinesterase (331 aa).

The first 17 residues, 1 to 17, serve as a signal peptide directing secretion; the sequence is MVKSILASVLFAATALA. Gln138 is a substrate binding site. Asp161 (proton donor) is an active-site residue. The active-site Nucleophile is the Asp182. Substrate is bound by residues Arg247 and Trp249.

Belongs to the pectinesterase family.

Its subcellular location is the secreted. The catalysed reaction is [(1-&gt;4)-alpha-D-galacturonosyl methyl ester](n) + n H2O = [(1-&gt;4)-alpha-D-galacturonosyl](n) + n methanol + n H(+). Its pathway is glycan metabolism; pectin degradation; 2-dehydro-3-deoxy-D-gluconate from pectin: step 1/5. Involved in maceration and soft-rotting of plant tissue. This Aspergillus niger protein is Pectinesterase (pme1).